We begin with the raw amino-acid sequence, 837 residues long: Protein kintoun (837 aa).

Disordered regions lie at residues 100–119 (APSS…GSHW), 205–224 (LPGV…LPDF), 230–249 (YPAA…LQPA), and 363–515 (AAAP…GPGT). Pro residues predominate over residues 233–242 (APGPRAPSPP). Over residues 428 to 442 (GEERVPKPGEQDLSR) the composition is skewed to basic and acidic residues. Residues 445–459 (GSPPGSVEEPSPGGE) are compositionally biased toward low complexity. A phosphoserine mark is found at S461 and S467. Positions 484–498 (ESARGDSSVETREES) are enriched in basic and acidic residues. Residues S640, S641, and S773 each carry the phosphoserine modification.

It belongs to the PIH1 family. Kintoun subfamily. In terms of assembly, interacts with CFAP300. Interacts with DNAAF4. Interacts with DNAAF6/PIH1D3. Interacts with DNAI2 and HSPA1A.

The protein localises to the cytoplasm. The protein resides in the dynein axonemal particle. Its function is as follows. Required for cytoplasmic pre-assembly of axonemal dyneins, thereby playing a central role in motility in cilia and flagella. Involved in pre-assembly of dynein arm complexes in the cytoplasm before intraflagellar transport loads them for the ciliary compartment. In Homo sapiens (Human), this protein is Protein kintoun.